Here is a 642-residue protein sequence, read N- to C-terminus: UvrABC system protein C (642 aa).

Residues 20–97 (ERCGVYRMFD…IKKFQPKFNI (78 aa)) enclose the GIY-YIG domain. Positions 207–242 (KELQENLSKKMEELSSQMRFEEAAEIRDRIKALSYV) constitute a UVR domain.

It belongs to the UvrC family. As to quaternary structure, interacts with UvrB in an incision complex.

It localises to the cytoplasm. In terms of biological role, the UvrABC repair system catalyzes the recognition and processing of DNA lesions. UvrC both incises the 5' and 3' sides of the lesion. The N-terminal half is responsible for the 3' incision and the C-terminal half is responsible for the 5' incision. The protein is UvrABC system protein C of Rickettsia felis (strain ATCC VR-1525 / URRWXCal2) (Rickettsia azadi).